The following is a 175-amino-acid chain: Crossover junction endodeoxyribonuclease RuvC (175 aa).

Residues D16, E76, and D148 contribute to the active site. Residues D16, E76, and D148 each coordinate Mg(2+).

It belongs to the RuvC family. In terms of assembly, homodimer which binds Holliday junction (HJ) DNA. The HJ becomes 2-fold symmetrical on binding to RuvC with unstacked arms; it has a different conformation from HJ DNA in complex with RuvA. In the full resolvosome a probable DNA-RuvA(4)-RuvB(12)-RuvC(2) complex forms which resolves the HJ. Mg(2+) is required as a cofactor.

The protein resides in the cytoplasm. The catalysed reaction is Endonucleolytic cleavage at a junction such as a reciprocal single-stranded crossover between two homologous DNA duplexes (Holliday junction).. In terms of biological role, the RuvA-RuvB-RuvC complex processes Holliday junction (HJ) DNA during genetic recombination and DNA repair. Endonuclease that resolves HJ intermediates. Cleaves cruciform DNA by making single-stranded nicks across the HJ at symmetrical positions within the homologous arms, yielding a 5'-phosphate and a 3'-hydroxyl group; requires a central core of homology in the junction. The consensus cleavage sequence is 5'-(A/T)TT(C/G)-3'. Cleavage occurs on the 3'-side of the TT dinucleotide at the point of strand exchange. HJ branch migration catalyzed by RuvA-RuvB allows RuvC to scan DNA until it finds its consensus sequence, where it cleaves and resolves the cruciform DNA. This chain is Crossover junction endodeoxyribonuclease RuvC, found in Rhodopseudomonas palustris (strain BisB18).